Consider the following 258-residue polypeptide: Hydroxyethylthiazole kinase (258 aa).

M37 contributes to the substrate binding site. R112 and T158 together coordinate ATP. A185 serves as a coordination point for substrate.

It belongs to the Thz kinase family. Requires Mg(2+) as cofactor.

It catalyses the reaction 5-(2-hydroxyethyl)-4-methylthiazole + ATP = 4-methyl-5-(2-phosphooxyethyl)-thiazole + ADP + H(+). It functions in the pathway cofactor biosynthesis; thiamine diphosphate biosynthesis; 4-methyl-5-(2-phosphoethyl)-thiazole from 5-(2-hydroxyethyl)-4-methylthiazole: step 1/1. Catalyzes the phosphorylation of the hydroxyl group of 4-methyl-5-beta-hydroxyethylthiazole (THZ). The chain is Hydroxyethylthiazole kinase from Rhizobium etli (strain ATCC 51251 / DSM 11541 / JCM 21823 / NBRC 15573 / CFN 42).